A 184-amino-acid chain; its full sequence is Ribosome-recycling factor (184 aa).

Belongs to the RRF family.

It is found in the cytoplasm. Responsible for the release of ribosomes from messenger RNA at the termination of protein biosynthesis. May increase the efficiency of translation by recycling ribosomes from one round of translation to another. This Bifidobacterium adolescentis (strain ATCC 15703 / DSM 20083 / NCTC 11814 / E194a) protein is Ribosome-recycling factor.